The following is a 188-amino-acid chain: NANOG neighbor homeobox (188 aa).

The interval 28–106 (ETILANKKQS…NEKQKQYPEK (79 aa)) is disordered. The span at 57 to 106 (QNGKQKWREEGEAGRKREREKEEKNEKELQDEQENKRKRENEKQKQYPEK) shows a compositional bias: basic and acidic residues. The segment at residues 102 to 161 (QYPEKRLVSKSLMHTLWAKFKLNRCPTIQESLSLSFEFDMTHKQISQWFCKTRKKYNKEM) is a DNA-binding region (homeobox).

It localises to the nucleus. The protein is NANOG neighbor homeobox (NANOGNB) of Homo sapiens (Human).